The following is a 236-amino-acid chain: Small ribosomal subunit protein uS3 (236 aa).

The KH type-2 domain maps to 39 to 107; that stretch reads VREFLKKKLA…PVHLNIEEVR (69 aa). The segment at 215-236 is disordered; that stretch reads AAQPAEPEKKVRKSGAKNAATS.

Belongs to the universal ribosomal protein uS3 family. Part of the 30S ribosomal subunit. Forms a tight complex with proteins S10 and S14.

Binds the lower part of the 30S subunit head. Binds mRNA in the 70S ribosome, positioning it for translation. The protein is Small ribosomal subunit protein uS3 of Methylobacillus flagellatus (strain ATCC 51484 / DSM 6875 / VKM B-1610 / KT).